The chain runs to 108 residues: Thiosulfate sulfurtransferase GlpE (108 aa).

Positions 18 to 106 (ENEGATLADI…WERSGLPIET (89 aa)) constitute a Rhodanese domain. C66 functions as the Cysteine persulfide intermediate in the catalytic mechanism.

The protein belongs to the GlpE family.

It localises to the cytoplasm. It carries out the reaction thiosulfate + hydrogen cyanide = thiocyanate + sulfite + 2 H(+). It catalyses the reaction thiosulfate + [thioredoxin]-dithiol = [thioredoxin]-disulfide + hydrogen sulfide + sulfite + 2 H(+). Transferase that catalyzes the transfer of sulfur from thiosulfate to thiophilic acceptors such as cyanide or dithiols. May function in a CysM-independent thiosulfate assimilation pathway by catalyzing the conversion of thiosulfate to sulfite, which can then be used for L-cysteine biosynthesis. The sequence is that of Thiosulfate sulfurtransferase GlpE from Actinobacillus pleuropneumoniae serotype 5b (strain L20).